Reading from the N-terminus, the 149-residue chain is 3-dehydroquinate dehydratase 2 (149 aa).

Residue Tyr-24 is the Proton acceptor of the active site. 3 residues coordinate substrate: Asn-75, His-81, and Asp-88. The active-site Proton donor is His-101. Residues 102–103 (LS) and Arg-112 contribute to the substrate site.

The protein belongs to the type-II 3-dehydroquinase family. As to quaternary structure, homododecamer.

The enzyme catalyses 3-dehydroquinate = 3-dehydroshikimate + H2O. It functions in the pathway metabolic intermediate biosynthesis; chorismate biosynthesis; chorismate from D-erythrose 4-phosphate and phosphoenolpyruvate: step 3/7. In terms of biological role, catalyzes a trans-dehydration via an enolate intermediate. The protein is 3-dehydroquinate dehydratase 2 (aroQ2) of Pseudomonas putida (strain ATCC 47054 / DSM 6125 / CFBP 8728 / NCIMB 11950 / KT2440).